A 1956-amino-acid polypeptide reads, in one-letter code: Probable cation-transporting ATPase 1 (1956 aa).

The Cytoplasmic segment spans residues 1 to 35; it reads MHLMCTGLRNEKLINDRKILYGECNLNIKSDSFII. Residues 36 to 58 form a helical membrane-spanning segment; the sequence is LLFKEIMNPFFIFQIFAMIVWSL. The Extracellular portion of the chain corresponds to 59–61; the sequence is DNY. Residues 62–80 form a helical membrane-spanning segment; sequence IEYTISILFITSISIILEL. Over 81–407 the chain is Cytoplasmic; that stretch reads KNTIKNQKKI…KKELNLINDS (327 aa). Residues 408–427 traverse the membrane as a helical segment; sequence YKFLIILIIYALFSVFILLY. The Extracellular segment spans residues 428–440; the sequence is ITLSNNEYTNHII. The helical transmembrane segment at 441–462 threads the bilayer; it reads IKCLDIITDAIPPALPTTLTVG. At 463 to 1818 the chain is on the cytoplasmic side; the sequence is ISIAISRLKK…SLVNSFQLFK (1356 aa). Asp496 serves as the catalytic 4-aspartylphosphate intermediate. Residues 901 to 938 are disordered; the sequence is YGNNNDDNNDDDNNNDDDNNDDNNNDDNNNDDNNDDNN. Residues 907-935 are compositionally biased toward acidic residues; it reads DNNDDDNNNDDDNNDDNNNDDNNNDDNND. Mg(2+)-binding residues include Asp1760 and Asp1764. Residues 1819–1837 traverse the membrane as a helical segment; the sequence is FISLYSIMQCSQVLILYSI. At 1838-1845 the chain is on the extracellular side; that stretch reads SNKLTDNQ. A helical transmembrane segment spans residues 1846 to 1863; sequence YIFIDIVTILPLSIFMCW. The Cytoplasmic portion of the chain corresponds to 1864–1881; sequence TSASEKLSKNIPIGKLFS. Residues 1882–1905 traverse the membrane as a helical segment; sequence FPILISIYGQIIIQLFFVMISLVV. Residues 1906–1928 are Extracellular-facing; it reads LMNLSFYKYDKNKVMKEKSDDTY. The helical transmembrane segment at 1929 to 1952 threads the bilayer; it reads LYKAQKYTLIYSLLFSKFVYVYIF. At 1953 to 1956 the chain is on the cytoplasmic side; that stretch reads KYKE.

The protein belongs to the cation transport ATPase (P-type) (TC 3.A.3) family. Type V subfamily.

The protein resides in the membrane. The catalysed reaction is ATP + H2O = ADP + phosphate + H(+). This is Probable cation-transporting ATPase 1 from Plasmodium falciparum.